Reading from the N-terminus, the 571-residue chain is Proline--tRNA ligase (571 aa).

Belongs to the class-II aminoacyl-tRNA synthetase family. ProS type 1 subfamily. As to quaternary structure, homodimer.

The protein localises to the cytoplasm. The enzyme catalyses tRNA(Pro) + L-proline + ATP = L-prolyl-tRNA(Pro) + AMP + diphosphate. Catalyzes the attachment of proline to tRNA(Pro) in a two-step reaction: proline is first activated by ATP to form Pro-AMP and then transferred to the acceptor end of tRNA(Pro). As ProRS can inadvertently accommodate and process non-cognate amino acids such as alanine and cysteine, to avoid such errors it has two additional distinct editing activities against alanine. One activity is designated as 'pretransfer' editing and involves the tRNA(Pro)-independent hydrolysis of activated Ala-AMP. The other activity is designated 'posttransfer' editing and involves deacylation of mischarged Ala-tRNA(Pro). The misacylated Cys-tRNA(Pro) is not edited by ProRS. This is Proline--tRNA ligase from Vibrio parahaemolyticus serotype O3:K6 (strain RIMD 2210633).